Reading from the N-terminus, the 71-residue chain is uncharacterized protein (71 aa).

This is an uncharacterized protein from Escherichia coli (strain K12).